Here is an 876-residue protein sequence, read N- to C-terminus: Phosphoenolpyruvate carboxylase (876 aa).

Active-site residues include histidine 138 and lysine 543.

This sequence belongs to the PEPCase type 1 family. Requires Mg(2+) as cofactor.

It carries out the reaction oxaloacetate + phosphate = phosphoenolpyruvate + hydrogencarbonate. Functionally, forms oxaloacetate, a four-carbon dicarboxylic acid source for the tricarboxylic acid cycle. In Vibrio atlanticus (strain LGP32) (Vibrio splendidus (strain Mel32)), this protein is Phosphoenolpyruvate carboxylase.